A 287-amino-acid polypeptide reads, in one-letter code: 4,4'-diapophytoene synthase (287 aa).

(2E,6E)-farnesyl diphosphate contacts are provided by residues H18 to S21, Y41, and R45. Mg(2+) is bound by residues D48 and D52. Q165 provides a ligand contact to (2E,6E)-farnesyl diphosphate. N168 is a Mg(2+) binding site. R171 lines the (2E,6E)-farnesyl diphosphate pocket. D172 provides a ligand contact to Mg(2+). Position 248 (Y248) interacts with (2E,6E)-farnesyl diphosphate.

It belongs to the phytoene/squalene synthase family. CrtM subfamily. The cofactor is Mg(2+).

It catalyses the reaction 2 (2E,6E)-farnesyl diphosphate = 15-cis-4,4'-diapophytoene + 2 diphosphate. Its pathway is carotenoid biosynthesis; staphyloxanthin biosynthesis; staphyloxanthin from farnesyl diphosphate: step 1/5. In terms of biological role, involved in the biosynthesis of the yellow-orange carotenoid staphyloxanthin, which plays a role in the virulence via its protective function against oxidative stress. Catalyzes the head-to-head condensation of two molecules of farnesyl diphosphate (FPP) into the colorless C(30) carotenoid 4,4'-diapophytoene (dehydrosqualene). The chain is 4,4'-diapophytoene synthase (crtM) from Staphylococcus aureus (strain Mu50 / ATCC 700699).